We begin with the raw amino-acid sequence, 154 residues long: UPF0178 protein Glov_0658 (154 aa).

The protein belongs to the UPF0178 family.

This is UPF0178 protein Glov_0658 from Trichlorobacter lovleyi (strain ATCC BAA-1151 / DSM 17278 / SZ) (Geobacter lovleyi).